Here is an 84-residue protein sequence, read N- to C-terminus: Putative membrane protein insertion efficiency factor (84 aa).

Positions 60–84 are disordered; it reads WSQPGEDPVPDHFSLKRNDTRKQSH. The segment covering 68 to 84 has biased composition (basic and acidic residues); the sequence is VPDHFSLKRNDTRKQSH.

It belongs to the UPF0161 family.

It localises to the cell membrane. In terms of biological role, could be involved in insertion of integral membrane proteins into the membrane. In Streptococcus gordonii (strain Challis / ATCC 35105 / BCRC 15272 / CH1 / DL1 / V288), this protein is Putative membrane protein insertion efficiency factor.